A 318-amino-acid polypeptide reads, in one-letter code: Probable dual-specificity RNA methyltransferase RlmN (318 aa).

The Proton acceptor role is filled by Glu63. The Radical SAM core domain maps to 69 to 299 (HDYGRTVCVS…VSLRRELGAD (231 aa)). Cys76 and Cys304 are oxidised to a cystine. Cys83, Cys87, and Cys90 together coordinate [4Fe-4S] cluster. S-adenosyl-L-methionine-binding positions include 130–131 (GE), Ser162, 185–187 (SLH), and Asn261. Cys304 functions as the S-methylcysteine intermediate in the catalytic mechanism.

This sequence belongs to the radical SAM superfamily. RlmN family. Requires [4Fe-4S] cluster as cofactor.

The protein localises to the cytoplasm. The enzyme catalyses adenosine(2503) in 23S rRNA + 2 reduced [2Fe-2S]-[ferredoxin] + 2 S-adenosyl-L-methionine = 2-methyladenosine(2503) in 23S rRNA + 5'-deoxyadenosine + L-methionine + 2 oxidized [2Fe-2S]-[ferredoxin] + S-adenosyl-L-homocysteine. The catalysed reaction is adenosine(37) in tRNA + 2 reduced [2Fe-2S]-[ferredoxin] + 2 S-adenosyl-L-methionine = 2-methyladenosine(37) in tRNA + 5'-deoxyadenosine + L-methionine + 2 oxidized [2Fe-2S]-[ferredoxin] + S-adenosyl-L-homocysteine. Its function is as follows. Specifically methylates position 2 of adenine 2503 in 23S rRNA and position 2 of adenine 37 in tRNAs. This is Probable dual-specificity RNA methyltransferase RlmN from Desulforudis audaxviator (strain MP104C).